The sequence spans 412 residues: Argininosuccinate synthase (412 aa).

ATP-binding positions include 10–18 (AYSGGLDTS) and alanine 36. 2 residues coordinate L-citrulline: tyrosine 87 and serine 92. Tyrosine 87 is subject to Phosphotyrosine. Lysine 112 is modified (N6-acetyllysine). Tyrosine 113 carries the post-translational modification Phosphotyrosine. 115 to 123 (SHGATGKGN) lines the ATP pocket. L-aspartate is bound by residues threonine 119, asparagine 123, and aspartate 124. Asparagine 123 is an L-citrulline binding site. Arginine 127 is an L-citrulline binding site. N6-acetyllysine; by CLOCK occurs at positions 165 and 176. Phosphoserine occurs at positions 177 and 180. Serine 180 and serine 189 together coordinate L-citrulline. Residue serine 219 is modified to Phosphoserine. Residues glutamate 270 and tyrosine 282 each coordinate L-citrulline.

This sequence belongs to the argininosuccinate synthase family. Type 1 subfamily. As to quaternary structure, homotetramer. Interacts with NMRAL1. Interacts with CLOCK; in a circadian manner. Forms tissue-specific complexes with ASL, SLC7A1, HSP90AA1 and nitric oxide synthase NOS1, NOS2 or NOS3; the complex regulates cell-autonomous L-arginine synthesis and citrulline recycling while channeling extracellular L-arginine to nitric oxide synthesis pathway. Post-translationally, acetylated by CLOCK in a circadian manner which negatively regulates its enzyme activity. Deacetylated by histone deacetylases. In terms of tissue distribution, widely expressed.

It localises to the cytoplasm. The protein localises to the cytosol. It carries out the reaction L-citrulline + L-aspartate + ATP = 2-(N(omega)-L-arginino)succinate + AMP + diphosphate + H(+). The protein operates within amino-acid biosynthesis; L-arginine biosynthesis; L-arginine from L-ornithine and carbamoyl phosphate: step 2/3. Its pathway is nitrogen metabolism; urea cycle; (N(omega)-L-arginino)succinate from L-aspartate and L-citrulline: step 1/1. One of the enzymes of the urea cycle, the metabolic pathway transforming neurotoxic amonia produced by protein catabolism into inocuous urea in the liver of ureotelic animals. Catalyzes the formation of arginosuccinate from aspartate, citrulline and ATP and together with ASL it is responsible for the biosynthesis of arginine in most body tissues. In Mus musculus (Mouse), this protein is Argininosuccinate synthase.